The primary structure comprises 67 residues: Conotoxin TsMMSK-011 (67 aa).

Residues 1 to 22 (MMSKLGVLLTICLLLFPLTVLP) form the signal peptide. A propeptide spanning residues 23–50 (MDGDQPADLPALRTQDIATDQSPWFDPV) is cleaved from the precursor. Disulfide bonds link C53-C65, C54-C61, and C58-C64. P63 bears the 4-hydroxyproline mark.

It belongs to the conotoxin M superfamily. As to expression, expressed by the venom duct.

It is found in the secreted. The polypeptide is Conotoxin TsMMSK-011 (Conus tessulatus (Tessellate cone)).